We begin with the raw amino-acid sequence, 486 residues long: NADH-quinone oxidoreductase subunit N (486 aa).

14 helical membrane passes run 11–31, 44–64, 74–94, 103–123, 128–148, 163–183, 206–226, 238–258, 267–287, 300–320, 328–348, 371–391, 404–424, and 452–472; these read ALPEIVLLIAVSAILIIDLFV, MLALVATGAATLAAWLPYPVL, PIASVAKLGLVVATGVAMIYA, FLKGELFTLMLFALLGMCVMV, MLTLYIGLELLSLALYALIAL, FVLGALASGLLLYGVSMVYGG, VSLGLVFIVAGLAFKLGAVPF, PTAVTLFVGSAPKLAAFVFVI, PAAVAWQPMLILLAIASLVVG, MLAYSTISHMGFMLIGILAAT, MFYAITYMLMALAGFGVLLAL, YALLVLLVMFSMAGIPPLVGF, VGLTWLAVVGVVMSLIGAFYY, and LVLGVNGLVLLGLGILPNGLY.

Belongs to the complex I subunit 2 family. NDH-1 is composed of 14 different subunits. Subunits NuoA, H, J, K, L, M, N constitute the membrane sector of the complex.

It localises to the cell inner membrane. It catalyses the reaction a quinone + NADH + 5 H(+)(in) = a quinol + NAD(+) + 4 H(+)(out). NDH-1 shuttles electrons from NADH, via FMN and iron-sulfur (Fe-S) centers, to quinones in the respiratory chain. The immediate electron acceptor for the enzyme in this species is believed to be ubiquinone. Couples the redox reaction to proton translocation (for every two electrons transferred, four hydrogen ions are translocated across the cytoplasmic membrane), and thus conserves the redox energy in a proton gradient. The chain is NADH-quinone oxidoreductase subunit N from Laribacter hongkongensis (strain HLHK9).